The primary structure comprises 166 residues: Large ribosomal subunit protein uL10 (166 aa).

Belongs to the universal ribosomal protein uL10 family. In terms of assembly, part of the ribosomal stalk of the 50S ribosomal subunit. The N-terminus interacts with L11 and the large rRNA to form the base of the stalk. The C-terminus forms an elongated spine to which L12 dimers bind in a sequential fashion forming a multimeric L10(L12)X complex.

Functionally, forms part of the ribosomal stalk, playing a central role in the interaction of the ribosome with GTP-bound translation factors. The sequence is that of Large ribosomal subunit protein uL10 from Hydrogenovibrio crunogenus (strain DSM 25203 / XCL-2) (Thiomicrospira crunogena).